The following is a 1318-amino-acid chain: Meiotically up-regulated gene 79 protein (1318 aa).

Disordered regions lie at residues 177-198, 208-227, and 360-387; these read PVNS…SGSY, EEEL…IVVT, and PQAL…PPKG. Over residues 364–384 the composition is skewed to low complexity; sequence AAAESPTTKAPTTKAPTSEAP. Residues 1049-1158 enclose the PH domain; sequence MISYKKMVLS…WIHSLNFNAA (110 aa).

It is found in the nucleus. Appears to have a role in sporulation. In Schizosaccharomyces pombe (strain 972 / ATCC 24843) (Fission yeast), this protein is Meiotically up-regulated gene 79 protein (mug79).